Consider the following 372-residue polypeptide: Putative glutamate--cysteine ligase 2 (372 aa).

This sequence belongs to the glutamate--cysteine ligase type 2 family. YbdK subfamily. Homodimer.

The enzyme catalyses L-cysteine + L-glutamate + ATP = gamma-L-glutamyl-L-cysteine + ADP + phosphate + H(+). Functionally, ATP-dependent carboxylate-amine ligase which exhibits weak glutamate--cysteine ligase activity. This is Putative glutamate--cysteine ligase 2 (ybdK) from Salmonella agona (strain SL483).